Consider the following 292-residue polypeptide: MTFADRLSAYTRLIRLDKPIGILLLLWPTLWGLWLAADGMPDPMILVIFILGTILMRSAGCAINDFADRRIDPHVSRTRNRPLAAGLITAREALLIAAGLSLCAFLLILPLNLLTIQLSVPALFLAASYPFTKRFFAMPQAYLGIAFSFGIPMAFAAQTGTVPPLAWLLVLANLFWVIAYDTEYALVDRADDLKIGIRTSAITLGRFDVAGILLCHIIFLSTLTYAGILLQRGIWFYGALLVALGLVIVQYGMIRKREPSRCFQAFLHNNWIGAVIFAGILLDTLFRTDQSF.

Helical transmembrane passes span 20–40, 43–63, 94–114, 135–155, 160–180, 209–229, 234–254, and 266–286; these read IGILLLLWPTLWGLWLAADGM, PMILVIFILGTILMRSAGCAI, LLIAAGLSLCAFLLILPLNLL, FFAMPQAYLGIAFSFGIPMAF, GTVPPLAWLLVLANLFWVIAY, VAGILLCHIIFLSTLTYAGIL, IWFYGALLVALGLVIVQYGMI, and FLHNNWIGAVIFAGILLDTLF.

This sequence belongs to the UbiA prenyltransferase family. It depends on Mg(2+) as a cofactor.

Its subcellular location is the cell inner membrane. The enzyme catalyses all-trans-octaprenyl diphosphate + 4-hydroxybenzoate = 4-hydroxy-3-(all-trans-octaprenyl)benzoate + diphosphate. It functions in the pathway cofactor biosynthesis; ubiquinone biosynthesis. Catalyzes the prenylation of para-hydroxybenzoate (PHB) with an all-trans polyprenyl group. Mediates the second step in the final reaction sequence of ubiquinone-8 (UQ-8) biosynthesis, which is the condensation of the polyisoprenoid side chain with PHB, generating the first membrane-bound Q intermediate 3-octaprenyl-4-hydroxybenzoate. The polypeptide is 4-hydroxybenzoate octaprenyltransferase (Nitrosomonas europaea (strain ATCC 19718 / CIP 103999 / KCTC 2705 / NBRC 14298)).